Reading from the N-terminus, the 92-residue chain is Alpha-conotoxin FrXXA (92 aa).

Residues 1–24 (MPKLEMMLLVLLILPLSYFDSAGG) form the signal peptide. Positions 25-45 (QAVKVDGHGDGMDRYLQRDDR) are excised as a propeptide. Disulfide bonds link Cys63–Cys72, Cys68–Cys80, Cys73–Cys90, and Cys78–Cys92.

This sequence belongs to the conotoxin D superfamily. As to quaternary structure, homodimer; disulfide-linked. Post-translationally, the homodimer contains 10 disulfide bonds. Expressed by the venom duct.

The protein localises to the secreted. In terms of biological role, alpha-conotoxins act on postsynaptic membranes, they bind to the nicotinic acetylcholine receptors (nAChR) and thus inhibit them. Through its two C-terminal domains, this homodimeric protein would bind to two nAChR allosteric sites, located outside the nAChR C-loop of the principal binding face and at the adjacent binding interface in a clockwise direction. This toxin blocks both neuronal and muscular subtypes: human alpha-7/CHRNA7, human alpha-3-beta-2 (CHRNA3-CHRNB2), human alpha-4-beta-2 (CHRNA4-CHRNB2), mouse adult muscular subtype alpha-1-beta-1-delta-epsilon (CHRNA1-CHRNB1-CHRND-CHRNE), and mouse fetal muscular subtype alpha-1-beta-1-gamma-delta (CHRNA1-CHRNB1-CHRNG-CHRND). Shows different dissociation rates towards the different subtypes, with a very slow rate towards alpha-7 subtype (almost irreversible), followed by the adult muscular subtype, the fetal muscular subtype, alpha-3-beta-2 and alpha-4-beta-2 (almost entirely reversible within a few minutes of washing). The sequence is that of Alpha-conotoxin FrXXA from Conus fergusoni (Ferguson's cone).